Here is a 658-residue protein sequence, read N- to C-terminus: NADPH-dependent diflavin oxidoreductase 1 (658 aa).

The 145-residue stretch at 16 to 160 (LTILYMTQTG…ELGPWMNRFW (145 aa)) folds into the Flavodoxin-like domain. FMN is bound by residues 22–27 (TQTGTS), 69–72 (STTG), 107–116 (LGDSTYPRFC), and aspartate 142. The FAD-binding FR-type domain occupies 215 to 502 (QGWSISILDK…IKPGYLTLPP (288 aa)). Residues arginine 400, 430–433 (REFS), and 474–477 (GLCT) contribute to the FAD site. NADP(+) is bound by residues threonine 514, 574–575 (SR), and 580–584 (KTYVQ). Tryptophan 657 is an FAD binding site.

The protein belongs to the NADPH-dependent diflavin oxidoreductase NDOR1 family. This sequence in the N-terminal section; belongs to the flavodoxin family. It in the C-terminal section; belongs to the flavoprotein pyridine nucleotide cytochrome reductase family. As to quaternary structure, interacts with DRE2; as part of the cytosolic iron-sulfur (Fe-S) protein assembly (CIA) machinery. Requires FAD as cofactor. The cofactor is FMN.

The protein localises to the cytoplasm. It is found in the mitochondrion. It catalyses the reaction 2 oxidized [2Fe-2S]-[protein] + NADPH = 2 reduced [2Fe-2S]-[protein] + NADP(+) + H(+). Its function is as follows. NADPH-dependent reductase which is a central component of the cytosolic iron-sulfur (Fe-S) protein assembly (CIA) machinery. Transfers electrons from NADPH via its FAD and FMN prosthetic groups to the [2Fe-2S] cluster of DRE2, another key component of the CIA machinery. In turn, this reduced cluster provides electrons for assembly of cytosolic iron-sulfur cluster proteins. Positively controls H(2)O(2)-induced cell death. The sequence is that of NADPH-dependent diflavin oxidoreductase 1 from Mycosarcoma maydis (Corn smut fungus).